A 449-amino-acid polypeptide reads, in one-letter code: MKSFEVNFDGLVGPTHNYGGLSYGNVASQSNSQQGSNPREAARQGLAKMKALMEMGFKQGVLAPQERPDIAALRRLGFTGSDAEVIQRAAKDAMPLLVASCSASSMWVANAATVSPSADTADGRVHFTAANLNCKYHRSIEHPTTSRVLGAMFSDEKVFAHHEALPAVAQFGDEGAANHTRFCRAYGEAGVEFFVYGRSAFDSRYPAPQKYPARQTLEASQAVARLHGLSDDGVVYAQQNPAVIDQGVFHNDVISVGNGEVLFYHEDAFLETDAVLGQLQAKLASKGGNFKGICVPRAAVTVEDAVRSYLFNSQLLSREDGSMLLVVPEECRNNERVWTYLGQLTSQGGPVKEVKVFDLKQSMQNGGGPACLRLRVALKENELAAVNPGVIMTASLYDTLVQWVDKHYRDRLGEADLADPQLLVECRTALDELTQILKLGSVYPFQRQP.

Residues 19-28 (GGLSYGNVAS), N110, and 137-138 (HR) contribute to the substrate site. The interval 23–43 (YGNVASQSNSQQGSNPREAAR) is disordered. Positions 25-37 (NVASQSNSQQGSN) are enriched in polar residues. The active site involves E174. Position 214 (R214) interacts with substrate. Residue H250 is part of the active site. D252 and N365 together coordinate substrate. The active-site Nucleophile is C371.

It belongs to the succinylarginine dihydrolase family. As to quaternary structure, homodimer.

It carries out the reaction N(2)-succinyl-L-arginine + 2 H2O + 2 H(+) = N(2)-succinyl-L-ornithine + 2 NH4(+) + CO2. Its pathway is amino-acid degradation; L-arginine degradation via AST pathway; L-glutamate and succinate from L-arginine: step 2/5. In terms of biological role, catalyzes the hydrolysis of N(2)-succinylarginine into N(2)-succinylornithine, ammonia and CO(2). The chain is N-succinylarginine dihydrolase from Pseudomonas entomophila (strain L48).